Consider the following 120-residue polypeptide: uncharacterized protein (120 aa).

This sequence belongs to the asp23 family.

This is an uncharacterized protein from Bacillus subtilis (strain 168).